A 277-amino-acid polypeptide reads, in one-letter code: Diaminopimelate epimerase (277 aa).

Residues N13, Q46, and N66 each coordinate substrate. The active-site Proton donor is the C75. Residues 76-77 (GN), N159, N192, and 210-211 (ER) each bind substrate. C219 serves as the catalytic Proton acceptor. 220-221 (GT) provides a ligand contact to substrate.

Belongs to the diaminopimelate epimerase family. Homodimer.

It is found in the cytoplasm. It catalyses the reaction (2S,6S)-2,6-diaminopimelate = meso-2,6-diaminopimelate. Its pathway is amino-acid biosynthesis; L-lysine biosynthesis via DAP pathway; DL-2,6-diaminopimelate from LL-2,6-diaminopimelate: step 1/1. Functionally, catalyzes the stereoinversion of LL-2,6-diaminopimelate (L,L-DAP) to meso-diaminopimelate (meso-DAP), a precursor of L-lysine and an essential component of the bacterial peptidoglycan. The protein is Diaminopimelate epimerase of Azoarcus sp. (strain BH72).